Here is a 78-residue protein sequence, read N- to C-terminus: Omega-conotoxin-like 12 (78 aa).

Positions 1–22 (MKLTCVVIVAVLLLTACQLITA) are cleaved as a signal peptide. Positions 23–42 (DDSRGTQKHRSLRSTTKVSK) are excised as a propeptide. Disulfide bonds link cysteine 46/cysteine 62, cysteine 53/cysteine 65, and cysteine 61/cysteine 72.

The protein belongs to the conotoxin O1 superfamily. In terms of tissue distribution, expressed by the venom duct.

Its subcellular location is the secreted. Functionally, omega-conotoxins act at presynaptic membranes, they bind and block voltage-gated calcium channels (Cav). The protein is Omega-conotoxin-like 12 of Conus striatus (Striated cone).